We begin with the raw amino-acid sequence, 501 residues long: ATP-dependent rRNA helicase RRP3 (501 aa).

Positions 3-44 form a coiled coil; that stretch reads KIVKRKEKKANDELTSLAEKIRAKALENQKKLIEAEKEGGSE. The disordered stretch occupies residues 36-79; the sequence is EAEKEGGSESDSEEDATAEKKKVLKSKSKSTVSTQNENTNEDES. 3 positions are modified to phosphoserine: S43, S45, and S47. The Q motif signature appears at 81-109; sequence ESFSELNLVPELIQACKNLNYSKPTPIQS. Residues 112–284 enclose the Helicase ATP-binding domain; sequence IPPALEGHDI…RASLTNPVKC (173 aa). An ATP-binding site is contributed by 125 to 132; it reads AQTGSGKT. The short motif at 231–234 is the DEAD box element; the sequence is DEAD. The Helicase C-terminal domain occupies 307–461; it reads LKNTYLIYLL…NIILTLRDSV (155 aa). Residues 480 to 501 are disordered; that stretch reads IARGKGRRGRMMTRENMDMGER. A compositionally biased stretch (basic and acidic residues) spans 491-501; it reads MTRENMDMGER.

The protein belongs to the DEAD box helicase family. DDX47/RRP3 subfamily. Interacts with the SSU processome.

The protein resides in the nucleus. It catalyses the reaction ATP + H2O = ADP + phosphate + H(+). With respect to regulation, ATPase activity is stimulated upon the addition of RNA. Its function is as follows. ATP-dependent rRNA helicase required for pre-ribosomal RNA processing. Involved in the maturation of the 35S-pre-rRNA and to its cleavage to mature 18S rRNA. The protein is ATP-dependent rRNA helicase RRP3 of Saccharomyces cerevisiae (strain ATCC 204508 / S288c) (Baker's yeast).